Consider the following 482-residue polypeptide: ATP synthase subunit beta (482 aa).

ATP is bound at residue Gly161 to Thr168.

It belongs to the ATPase alpha/beta chains family. As to quaternary structure, F-type ATPases have 2 components, CF(1) - the catalytic core - and CF(0) - the membrane proton channel. CF(1) has five subunits: alpha(3), beta(3), gamma(1), delta(1), epsilon(1). CF(0) has three main subunits: a(1), b(2) and c(9-12). The alpha and beta chains form an alternating ring which encloses part of the gamma chain. CF(1) is attached to CF(0) by a central stalk formed by the gamma and epsilon chains, while a peripheral stalk is formed by the delta and b chains.

It localises to the cell inner membrane. It catalyses the reaction ATP + H2O + 4 H(+)(in) = ADP + phosphate + 5 H(+)(out). Functionally, produces ATP from ADP in the presence of a proton gradient across the membrane. The catalytic sites are hosted primarily by the beta subunits. The chain is ATP synthase subunit beta from Solibacter usitatus (strain Ellin6076).